Here is a 270-residue protein sequence, read N- to C-terminus: uncharacterized protein (270 aa).

Topologically, residues 1–37 are cytoplasmic; the sequence is MATHTSKRRIHRWENNELSEENSTIIYFPARGLMWTH. A helical transmembrane segment spans residues 38–58; that stretch reads FPFVLGICLEFVGYVLKIVFI. Residues 59 to 65 lie on the Extracellular side of the membrane; that stretch reads NSPSIST. Residues 66–86 form a helical membrane-spanning segment; the sequence is FIAQSVLLLIAPSLYALSIFM. The Cytoplasmic portion of the chain corresponds to 87–93; the sequence is LFSKMAR. The chain crosses the membrane as a helical span at residues 94-114; sequence LILMEAYMLIPAKFSTVSFVV. Residues 115-140 lie on the Extracellular side of the membrane; the sequence is ADMIGRVLQAVGGGLLSSWNSRNTGR. A helical transmembrane segment spans residues 141-161; sequence ILIIVGLFIQIFCYTFLTFSQ. Residues 162 to 181 are Cytoplasmic-facing; that stretch reads LFLHYKMKATPSKIVRDSNE. Residues 182–202 form a helical membrane-spanning segment; that stretch reads WFQYNFILLAGILLVNGRTIV. At 203–220 the chain is on the extracellular side; sequence RVVQFLMGLQSYIGQHEW. A helical transmembrane segment spans residues 221–241; that stretch reads CLYVFDTVLMFLLPLIFLATF. At 242–270 the chain is on the cytoplasmic side; sequence RARNLFKLQDKSVNIQLNKLLDKESVSED.

Belongs to the lipid-translocating exporter (LTE) (TC 9.A.26.1) family.

Its subcellular location is the membrane. This is an uncharacterized protein from Saccharomyces cerevisiae (strain ATCC 204508 / S288c) (Baker's yeast).